Reading from the N-terminus, the 629-residue chain is uncharacterized protein (629 aa).

The region spanning 4-255 (LKAENLYKTY…KRAEREAQAE (252 aa)) is the ABC transporter 1 domain. 36–43 (GPNGTGKS) lines the ATP pocket. Positions 284 to 304 (KARIDRVETLKEQTGPQSSGS) are disordered. Residues 285–294 (ARIDRVETLK) show a composition bias toward basic and acidic residues. A compositionally biased stretch (polar residues) spans 295–304 (EQTGPQSSGS). The ABC transporter 2 domain maps to 319–537 (IEAENVMIAY…EESKAKKAAP (219 aa)). Residue 351–358 (GPNGIGKT) coordinates ATP. Residues 530–555 (SKAKKAAPKPAAEEKTAEAEPKKKRK) form a disordered region. Basic and acidic residues predominate over residues 540–550 (AAEEKTAEAEP). Residues 560-629 (KDQLEWDGIE…LSLMIEELES (70 aa)) are a coiled coil.

Belongs to the ABC transporter superfamily.

This is an uncharacterized protein from Bacillus subtilis (strain 168).